We begin with the raw amino-acid sequence, 664 residues long: Threonine--tRNA ligase (664 aa).

One can recognise a TGS domain in the interval 1–64; it reads MSELLKITLP…TADAQLALVT (64 aa). The catalytic stretch occupies residues 250–559; that stretch reads DHRKLGNEMD…LIEHFAGRLP (310 aa). Zn(2+) is bound by residues C355, H406, and H536.

Belongs to the class-II aminoacyl-tRNA synthetase family. As to quaternary structure, homodimer. It depends on Zn(2+) as a cofactor.

The protein localises to the cytoplasm. It carries out the reaction tRNA(Thr) + L-threonine + ATP = L-threonyl-tRNA(Thr) + AMP + diphosphate + H(+). Catalyzes the attachment of threonine to tRNA(Thr) in a two-step reaction: L-threonine is first activated by ATP to form Thr-AMP and then transferred to the acceptor end of tRNA(Thr). Also edits incorrectly charged L-seryl-tRNA(Thr). This Novosphingobium aromaticivorans (strain ATCC 700278 / DSM 12444 / CCUG 56034 / CIP 105152 / NBRC 16084 / F199) protein is Threonine--tRNA ligase.